The following is a 176-amino-acid chain: Insulin-like growth factor 1 (176 aa).

Residues 45–73 (GPETLCGAELVDTLQFVCGERGFYFSKPT) form a b region. 3 disulfides stabilise this stretch: C50–C92, C62–C105, and C91–C96. The c stretch occupies residues 74-85 (GYGPSSRRSHNR). An a region spans residues 86 to 106 (GIVDECCFQSCELRRLEMYCA). Residues 107 to 114 (PVKSGKAA) are d. The propeptide at 115-176 (RSVRAQRHTD…GNTGGRNYRM (62 aa)) is e peptide. The interval 115–176 (RSVRAQRHTD…GNTGGRNYRM (62 aa)) is disordered. The segment covering 140–161 (RGTERRTAQHPDKTKPKKEVHQ) has biased composition (basic and acidic residues).

Belongs to the insulin family.

Its subcellular location is the secreted. Functionally, the insulin-like growth factors, isolated from plasma, are structurally and functionally related to insulin but have a much higher growth-promoting activity. Acts as a ligand for IGF1R. Binds to the alpha subunit of IGF1R, leading to the activation of the intrinsic tyrosine kinase activity which autophosphorylates tyrosine residues in the beta subunit thus initiatiating a cascade of down-stream signaling events leading to activation of the PI3K-AKT/PKB and the Ras-MAPK pathways. Binds to integrins. Its binding to integrins and subsequent ternary complex formation with integrins and IGFR1 are essential for IGF1 signaling. The protein is Insulin-like growth factor 1 of Oncorhynchus mykiss (Rainbow trout).